We begin with the raw amino-acid sequence, 325 residues long: Isoaspartyl peptidase/L-asparaginase (325 aa).

T193 serves as the catalytic Nucleophile. Substrate contacts are provided by residues 221-224 (RIGD) and 243-246 (TGKG).

The protein belongs to the Ntn-hydrolase family. In terms of assembly, heterotetramer of two alpha and two beta chains arranged as a dimer of alpha/beta heterodimers. Cleaved into an alpha and beta chain by autocatalysis; this activates the enzyme. The N-terminal residue of the beta subunit is responsible for the nucleophile hydrolase activity. As to expression, expressed in ripening seeds and developing nodules.

It carries out the reaction Cleavage of a beta-linked Asp residue from the N-terminus of a polypeptide.. Functionally, degrades proteins damaged by L-isoaspartyl residue formation (also known as beta-Asp residues). Also has L-asparaginase activity, which is used to liberate stored nitrogen during seed development. The protein is Isoaspartyl peptidase/L-asparaginase of Lupinus luteus (European yellow lupine).